A 162-amino-acid chain; its full sequence is MERLIEKLLYSSRWIMAPIYLGLSLLLLALGIKFFQEIFHLLPNIFTIKEVDLILVALSLIDVSLVGGLIVMVMFSGYENFVSKLDVDESEDKLGWLGKLDTSSLKNKVSASIVAISSIHLLKVFMNTENIESDKIKWYLLLHITFVVSAFAMGYLDKITKK.

The next 4 helical transmembrane spans lie at 15–35 (IMAP…IKFF), 53–73 (LILV…IVMV), 109–126 (VSAS…KVFM), and 136–156 (IKWY…MGYL).

The protein belongs to the UPF0114 family.

It localises to the cell membrane. The chain is UPF0114 protein VCM66_0196 from Vibrio cholerae serotype O1 (strain M66-2).